The primary structure comprises 353 residues: 3-isopropylmalate dehydrogenase (353 aa).

76 to 89 contacts NAD(+); that stretch reads GPKWDDPRAKVRPE. Substrate contacts are provided by Arg-96, Arg-106, Arg-134, and Asp-223. Residues Asp-223, Asp-247, and Asp-251 each contribute to the Mg(2+) site. Position 281 to 293 (281 to 293) interacts with NAD(+); it reads GSAPDIAGKGIAN.

Belongs to the isocitrate and isopropylmalate dehydrogenases family. LeuB type 1 subfamily. Homodimer. Mg(2+) is required as a cofactor. Mn(2+) serves as cofactor.

Its subcellular location is the cytoplasm. The enzyme catalyses (2R,3S)-3-isopropylmalate + NAD(+) = 4-methyl-2-oxopentanoate + CO2 + NADH. It participates in amino-acid biosynthesis; L-leucine biosynthesis; L-leucine from 3-methyl-2-oxobutanoate: step 3/4. In terms of biological role, catalyzes the oxidation of 3-carboxy-2-hydroxy-4-methylpentanoate (3-isopropylmalate) to 3-carboxy-4-methyl-2-oxopentanoate. The product decarboxylates to 4-methyl-2 oxopentanoate. This chain is 3-isopropylmalate dehydrogenase, found in Anaeromyxobacter dehalogenans (strain 2CP-C).